A 420-amino-acid chain; its full sequence is Serine--tRNA ligase (420 aa).

228–230 serves as a coordination point for L-serine; sequence TAE. 259 to 261 contributes to the ATP binding site; the sequence is RSE. Glutamate 282 is an L-serine binding site. 346 to 349 lines the ATP pocket; the sequence is EISS. Serine 382 serves as a coordination point for L-serine.

It belongs to the class-II aminoacyl-tRNA synthetase family. Type-1 seryl-tRNA synthetase subfamily. As to quaternary structure, homodimer. The tRNA molecule binds across the dimer.

The protein resides in the cytoplasm. It carries out the reaction tRNA(Ser) + L-serine + ATP = L-seryl-tRNA(Ser) + AMP + diphosphate + H(+). The enzyme catalyses tRNA(Sec) + L-serine + ATP = L-seryl-tRNA(Sec) + AMP + diphosphate + H(+). Its pathway is aminoacyl-tRNA biosynthesis; selenocysteinyl-tRNA(Sec) biosynthesis; L-seryl-tRNA(Sec) from L-serine and tRNA(Sec): step 1/1. Catalyzes the attachment of serine to tRNA(Ser). Is also able to aminoacylate tRNA(Sec) with serine, to form the misacylated tRNA L-seryl-tRNA(Sec), which will be further converted into selenocysteinyl-tRNA(Sec). The polypeptide is Serine--tRNA ligase (Mycoplasmoides gallisepticum (strain R(low / passage 15 / clone 2)) (Mycoplasma gallisepticum)).